The primary structure comprises 815 residues: Chromatin assembly factor 1 subunit FAS1 (815 aa).

Disordered stretches follow at residues 1–39, 292–330, 434–477, 502–577, and 791–815; these read MDEV…TSEE, NNKE…KKQL, KLST…KKSR, QVVK…EGVQ, and RCLP…NENA. Basic and acidic residues-rich tracts occupy residues 10–21 and 292–328; these read NENRKTMIEPKK and NNKE…ELKK. The stretch at 244–336 forms a coiled coil; that stretch reads EEKLLLKQLE…KKQLQVQKQA (93 aa). Acidic residues-rich tracts occupy residues 516–532 and 554–576; these read LDYE…EEAG and DDED…DEGV. Basic and acidic residues predominate over residues 806–815; that stretch reads AAERLENENA.

It belongs to the CHAF1A family. Component of the chromatin assembly factor 1 (CAF-1) complex, composed of FAS1, FAS2 and MSI1. Interacts with CYP71. Expressed in the shoot apical meristem, young leaf primordia, root tip and first lateral root primordium at the hypocotyl/root junction.

The protein resides in the nucleus. Functionally, component of the chromatin assembly factor complex (CAF-1) involved in chromatin assembly following DNA replication and DNA repair. Assembles histone octamers onto replicating DNA in vitro. Required for several aspects of development, including seedling growth and leaf hair differentiation. Plays a critical role in the organization of shoot apical meristem (SAM) and root apical meristem (RAM) during postembryonic development by facilitating stable maintenance of gene expression states. Seems not required to maintain transcriptional repression of heterochromatic genes. Involved in heterologous recombination. May repress endocycle. This Arabidopsis thaliana (Mouse-ear cress) protein is Chromatin assembly factor 1 subunit FAS1 (FAS1).